Reading from the N-terminus, the 323-residue chain is Serine acetyltransferase 2 (323 aa).

Residues 302–323 (AQSNGPSLSAGDTEKGHTNSTS) are disordered. Over residues 313–323 (DTEKGHTNSTS) the composition is skewed to basic and acidic residues.

This sequence belongs to the transferase hexapeptide repeat family. As to quaternary structure, homomultimer. Ubiquitously expressed at low levels. Localized in vascular tissues, particularly in phloem.

It localises to the cytoplasm. It catalyses the reaction L-serine + acetyl-CoA = O-acetyl-L-serine + CoA. It functions in the pathway amino-acid biosynthesis; L-cysteine biosynthesis; L-cysteine from L-serine: step 1/2. The polypeptide is Serine acetyltransferase 2 (Arabidopsis thaliana (Mouse-ear cress)).